A 170-amino-acid chain; its full sequence is Peptide deformylase (170 aa).

Fe cation-binding residues include cysteine 94 and histidine 136. Residue glutamate 137 is part of the active site. A Fe cation-binding site is contributed by histidine 140.

Belongs to the polypeptide deformylase family. Fe(2+) serves as cofactor.

The enzyme catalyses N-terminal N-formyl-L-methionyl-[peptide] + H2O = N-terminal L-methionyl-[peptide] + formate. Its function is as follows. Removes the formyl group from the N-terminal Met of newly synthesized proteins. Requires at least a dipeptide for an efficient rate of reaction. N-terminal L-methionine is a prerequisite for activity but the enzyme has broad specificity at other positions. The protein is Peptide deformylase of Wolinella succinogenes (strain ATCC 29543 / DSM 1740 / CCUG 13145 / JCM 31913 / LMG 7466 / NCTC 11488 / FDC 602W) (Vibrio succinogenes).